We begin with the raw amino-acid sequence, 472 residues long: tRNA(Ile)-lysidine synthase (472 aa).

25–30 (SGGPDS) serves as a coordination point for ATP.

The protein belongs to the tRNA(Ile)-lysidine synthase family.

It is found in the cytoplasm. It catalyses the reaction cytidine(34) in tRNA(Ile2) + L-lysine + ATP = lysidine(34) in tRNA(Ile2) + AMP + diphosphate + H(+). In terms of biological role, ligates lysine onto the cytidine present at position 34 of the AUA codon-specific tRNA(Ile) that contains the anticodon CAU, in an ATP-dependent manner. Cytidine is converted to lysidine, thus changing the amino acid specificity of the tRNA from methionine to isoleucine. The polypeptide is tRNA(Ile)-lysidine synthase (tilS) (Bacillus subtilis (strain 168)).